The following is a 141-amino-acid chain: Small ribosomal subunit protein bS6 (141 aa).

Residues 96-141 (VTGQSEMLKAEENRSERRERRERPEHADSAEGDDSNDSDSSDNADE) form a disordered region. Residues 103–124 (LKAEENRSERRERRERPEHADS) show a composition bias toward basic and acidic residues. Residues 125-141 (AEGDDSNDSDSSDNADE) show a composition bias toward acidic residues.

This sequence belongs to the bacterial ribosomal protein bS6 family.

Functionally, binds together with bS18 to 16S ribosomal RNA. This Pseudomonas putida (strain ATCC 700007 / DSM 6899 / JCM 31910 / BCRC 17059 / LMG 24140 / F1) protein is Small ribosomal subunit protein bS6.